A 319-amino-acid chain; its full sequence is Protein SICKLE (319 aa).

3 disordered regions span residues 1-59, 71-239, and 262-299; these read MEDS…TQRF, SFKK…PGAE, and CSDASSSSSTGQAWLPKSIAPKKSVTSEATHKTSSNQQ. Polar residues-rich tracts occupy residues 27–56 and 78–88; these read TTGTETSMSTGHLSNPLAETSNHQQDSFET and PKQQYISSPSH. Over residues 93-103 the composition is skewed to pro residues; sequence PVPPQFPPSVP. Residues 185–210 are compositionally biased toward polar residues; the sequence is SYNNTPPQFSNYGRQNANWGGNTYPN. Residues 228–238 are compositionally biased toward basic and acidic residues; the sequence is DGGRRPMEPGA. Polar residues predominate over residues 285–299; that stretch reads SVTSEATHKTSSNQQ.

Interacts with ubiquitin thioesterases UBP12 and UBP13, and with protein phosphatase 2A subunits PP2AB1, PP2AB2, PP2A3, PP2A4, PP2AA1 and PP2AA2. Expressed in the shoot apical meristem (SAM), embryos, seedlings, root tips, and root and leaf primordia.

It is found in the nucleus. Its subcellular location is the cytoplasm. It localises to the cytosol. In terms of biological role, involved in miRNAs and siRNAs biogenesis and thus promotes gene silencing. Modulates auxin (IAA) transport-related developmental programs by regulating protein phosphatase 2A (PP2As)-driven auxin efflux carrier PIN proteins recycling and polarity. Required during development. Necessary for abiotic stress (e.g. chilling and salt) tolerance. The polypeptide is Protein SICKLE (Arabidopsis thaliana (Mouse-ear cress)).